An 89-amino-acid polypeptide reads, in one-letter code: uncharacterized protein (89 aa).

The first 27 residues, 1–27 (MKKAAAVLLSLGLVFGFSYGAGHVAEA), serve as a signal peptide directing secretion.

This is an uncharacterized protein from Bacillus subtilis (strain 168).